We begin with the raw amino-acid sequence, 1370 residues long: DNA-directed RNA polymerase subunit beta (1370 aa).

This sequence belongs to the RNA polymerase beta chain family. In terms of assembly, the RNAP catalytic core consists of 2 alpha, 1 beta, 1 beta' and 1 omega subunit. When a sigma factor is associated with the core the holoenzyme is formed, which can initiate transcription.

It catalyses the reaction RNA(n) + a ribonucleoside 5'-triphosphate = RNA(n+1) + diphosphate. Its function is as follows. DNA-dependent RNA polymerase catalyzes the transcription of DNA into RNA using the four ribonucleoside triphosphates as substrates. This chain is DNA-directed RNA polymerase subunit beta, found in Bordetella pertussis (strain Tohama I / ATCC BAA-589 / NCTC 13251).